The primary structure comprises 910 residues: MTTSLPPQYEPTVTEAKWQTAWEESHAFKADPDRPGEPYCVVIPPPNVTGSLHMGHAFESSLIDTLVRYHRMRGDNTLWLPGTDHASIAVQTILERQLKAEGKTRDDLGREKFLERAWQWKAESGSTIVNQLRRLGVSVDWTRERFTMDEGLSQAVKTAFIKLYEEGLIYRGNYLVNWCPASQSAVSDLEVENQEVDGHLWYFRYPLTDGSGELVVATTRPETMLGDTGVAVNPHDERYAAMVGKTITLPLVNREIPIVADELVDPEFGTGCVKVTPAHDPNDFVMGQRHNLPFINLLNKDGSLNENGGDFAGQDRFEARKNVVQALEAQGFLVKIEPYRHSVPYGDRGKVPVEPLLSTQWFVKIESLAQNALACLDEDNSPNFVPERWGKVYRDWLVKLKDWCISRQLWWGHQIPAWYVISETNGAITDHTPFIVAYDEAEALAKAKAEYGPTVQLQQDPDVLDTWFSSGLWPFSTMGWPEQTDDLAKYYPTSTLVTGFDIIFFWVARMTMMAGHFTGQIPFKDVYIHGLVRDENGKKMSKSANNGIDPLLLINKYGTDALRYTLIREVAGAGQDISLQYDRQKDESESVEASRNFANKLWNAARFVMMNLDGQTPQQLGLAPGEDLELADRWILSRLNQVIQQTREQIEDYGLGEAAKGLYEFIWGDFCDWYIELAKPRLWNKEGGDVGTQRQLVARQVLAHTLDSIIKLLHPFMPHITEELWQTLHQAEGQFLALQAYPTVNQSLVDPALETQFALLIETLRTIRNLRAEAGIKPGAMVTVILQSENDQERQTLQLGETYIRDIGKVENLQVVSQLPPEQTQAIAGVVDTIQVLIPLSGLVDLDILRNKIQKTLDKVTKEYESIEKRLSNPGFVNKAPEEVIAGAKESLNAAAVQRQMLQERLKMLG.

The 'HIGH' region signature appears at 46–56; that stretch reads PNVTGSLHMGH. Residues 539–543 carry the 'KMSKS' region motif; it reads KMSKS. Lysine 542 is a binding site for ATP. Residues 845-909 are a coiled coil; it reads DLDILRNKIQ…QMLQERLKML (65 aa).

It belongs to the class-I aminoacyl-tRNA synthetase family. ValS type 1 subfamily. Monomer.

It localises to the cytoplasm. It carries out the reaction tRNA(Val) + L-valine + ATP = L-valyl-tRNA(Val) + AMP + diphosphate. Its function is as follows. Catalyzes the attachment of valine to tRNA(Val). As ValRS can inadvertently accommodate and process structurally similar amino acids such as threonine, to avoid such errors, it has a 'posttransfer' editing activity that hydrolyzes mischarged Thr-tRNA(Val) in a tRNA-dependent manner. This is Valine--tRNA ligase from Synechocystis sp. (strain ATCC 27184 / PCC 6803 / Kazusa).